We begin with the raw amino-acid sequence, 278 residues long: uncharacterized protein (278 aa).

The N-terminal stretch at 1-20 (MSPLIVGTLIIILLSGLATA) is a signal peptide. Residue G96 is the site of GPI-anchor amidated glycine attachment. The propeptide at 97-278 (TFLTSPTAKR…QLIMQTFNGS (182 aa)) is removed in mature form.

The protein localises to the cell membrane. This is an uncharacterized protein from Schizosaccharomyces pombe (strain 972 / ATCC 24843) (Fission yeast).